The following is a 444-amino-acid chain: Cell division cycle 20.4, cofactor of APC complex (444 aa).

The span at 88-99 (LLSTNHSDSPHQ) shows a compositional bias: polar residues. The interval 88–108 (LLSTNHSDSPHQNPKPVKPRR) is disordered. WD repeat units follow at residues 124–161 (RDDFSLNLLDWGSANVLAIALGDTVYLWDASSGSTSEL), 166–205 (EDKGPVTSINWTQDGLDLAVGLDNSEVQLWDCVSNRQVRT), 209–246 (GHESRVGSLAWDNHILTTGGMDGKIVNNDVRIRSSIVE), 250–289 (GHTEEVCGLKWSESGNKQASGGNDNVVHIWDRSLASSKQT), 298–340 (EHTA…CLNS), 342–383 (ETGS…KMAE), and 386–425 (GHTSRVLFMAQSPNGCTVASAAGDENLRLWNVFGEPPKTT).

It belongs to the WD repeat CDC20/Fizzy family. In terms of assembly, the APC/C is composed of at least 11 subunits that stay tightly associated throughout the cell cycle.

It localises to the cytoplasm. It participates in protein modification; protein ubiquitination. In terms of biological role, component of the anaphase promoting complex/cyclosome (APC/C), a cell cycle-regulated E3 ubiquitin-protein ligase complex that controls progression through mitosis and the G1 phase of the cell cycle. In Arabidopsis thaliana (Mouse-ear cress), this protein is Cell division cycle 20.4, cofactor of APC complex (CDC20-4).